The primary structure comprises 284 residues: uncharacterized protein (284 aa).

The segment at 37-65 (NEKKLICFSIINGENCIYGPNCTYAHSLS) adopts a C3H1-type zinc-finger fold.

This is an uncharacterized protein from Acanthamoeba polyphaga (Amoeba).